We begin with the raw amino-acid sequence, 370 residues long: Phospho-2-dehydro-3-deoxyheptonate aldolase, phenylalanine-inhibited (370 aa).

The protein belongs to the class-I DAHP synthase family.

It carries out the reaction D-erythrose 4-phosphate + phosphoenolpyruvate + H2O = 7-phospho-2-dehydro-3-deoxy-D-arabino-heptonate + phosphate. Its pathway is metabolic intermediate biosynthesis; chorismate biosynthesis; chorismate from D-erythrose 4-phosphate and phosphoenolpyruvate: step 1/7. Its activity is regulated as follows. Inhibited by phenyalanine. Its function is as follows. Stereospecific condensation of phosphoenolpyruvate (PEP) and D-erythrose-4-phosphate (E4P) giving rise to 3-deoxy-D-arabino-heptulosonate-7-phosphate (DAHP). The chain is Phospho-2-dehydro-3-deoxyheptonate aldolase, phenylalanine-inhibited (ARO3) from Saccharomyces cerevisiae (strain ATCC 204508 / S288c) (Baker's yeast).